A 223-amino-acid polypeptide reads, in one-letter code: Deoxyribose-phosphate aldolase (223 aa).

The Proton donor/acceptor role is filled by aspartate 89. Residue lysine 152 is the Schiff-base intermediate with acetaldehyde of the active site. The Proton donor/acceptor role is filled by lysine 181.

Belongs to the DeoC/FbaB aldolase family. DeoC type 1 subfamily.

The protein localises to the cytoplasm. The enzyme catalyses 2-deoxy-D-ribose 5-phosphate = D-glyceraldehyde 3-phosphate + acetaldehyde. Its pathway is carbohydrate degradation; 2-deoxy-D-ribose 1-phosphate degradation; D-glyceraldehyde 3-phosphate and acetaldehyde from 2-deoxy-alpha-D-ribose 1-phosphate: step 2/2. In terms of biological role, catalyzes a reversible aldol reaction between acetaldehyde and D-glyceraldehyde 3-phosphate to generate 2-deoxy-D-ribose 5-phosphate. The protein is Deoxyribose-phosphate aldolase of Bacillus mycoides (strain KBAB4) (Bacillus weihenstephanensis).